We begin with the raw amino-acid sequence, 402 residues long: Deacetylase Oant_2987 (402 aa).

The Zn(2+) site is built by His70, His72, Lys168, His201, His224, and Asp284. Lys168 carries the N6-carboxylysine modification.

It belongs to the metallo-dependent hydrolases superfamily. Atu3266/EF_0837 deacetylase family. The cofactor is Zn(2+).

Functionally, esterase that catalyzes the deacetylation of acetyl-(R)-mandelate (in vitro). Can also hydrolyze acetyl glycolate, but with lower efficiency. Has very low N-acetyl-D-amino acid deacetylase activity with N-acetyl-D-serine and N-acetyl-D-threonine (in vitro). Theoretical substrate docking studies suggest that other N-acetylated amino acids may optimally occupy the active site and may in fact be the physiological substrates. The protein is Deacetylase Oant_2987 of Brucella anthropi (strain ATCC 49188 / DSM 6882 / CCUG 24695 / JCM 21032 / LMG 3331 / NBRC 15819 / NCTC 12168 / Alc 37) (Ochrobactrum anthropi).